We begin with the raw amino-acid sequence, 79 residues long: uncharacterized protein (79 aa).

The signal sequence occupies residues 1–33 (MRLSIRAIVLFALVWIGLLMSGYGVLVGSKVNA).

This is an uncharacterized protein from Salmonella paratyphi A (strain ATCC 9150 / SARB42).